Reading from the N-terminus, the 93-residue chain is Phosphoribosyl-ATP pyrophosphatase (93 aa).

It belongs to the PRA-PH family.

Its subcellular location is the cytoplasm. The catalysed reaction is 1-(5-phospho-beta-D-ribosyl)-ATP + H2O = 1-(5-phospho-beta-D-ribosyl)-5'-AMP + diphosphate + H(+). It functions in the pathway amino-acid biosynthesis; L-histidine biosynthesis; L-histidine from 5-phospho-alpha-D-ribose 1-diphosphate: step 2/9. The polypeptide is Phosphoribosyl-ATP pyrophosphatase (Mycolicibacterium paratuberculosis (strain ATCC BAA-968 / K-10) (Mycobacterium paratuberculosis)).